The chain runs to 1074 residues: DNA annealing helicase and endonuclease ZRANB3 (1074 aa).

The Helicase ATP-binding domain maps to 46 to 208; sequence TFALRRDGRC…FMQIEALFPQ (163 aa). Positions 46-481 are DNA annealing helicase activity; it reads TFALRRDGRC…GRKEKLQAEE (436 aa). 59 to 66 provides a ligand contact to ATP; it reads DEMGLGKT. The short motif at 157–160 is the DEAH box element; that stretch reads DESH. One can recognise a Helicase C-terminal domain in the interval 325–481; the sequence is AVKDYIKMML…GRKEKLQAEE (157 aa). Residues 519–526 carry the PIP-box motif; the sequence is QRDIRSFF. Residue Ser-566 is modified to Phosphoserine. A RanBP2-type zinc finger spans residues 617 to 647; the sequence is FCGEGWQCAFCTYINNSVLPYCEMCENPRGG. Residues 659–719 are disordered; the sequence is QNKNKNEKDD…RLTPQPGDEQ (61 aa). Basic and acidic residues-rich tracts occupy residues 662–674 and 696–711; these read NKNEKDDSQDTSK and AKSKEEISTTESEDRL. In terms of domain architecture, HNH spans 1006–1046; the sequence is PGEGHFWQVDHIKPVSGGGGQCSLDNLQTLCTVCHRERTAQ. Residues 1006 to 1074 form an endonuclease activity region; it reads PGEGHFWQVD…SDITRFLVKK (69 aa). An APIM motif motif is present at residues 1069-1073; sequence RFLVK.

It belongs to the SNF2/RAD54 helicase family. As to quaternary structure, interacts (via PIP-box and RanBP2-type zinc finger) with PCNA (when PCNA is polyubiquitinated via 'Lys-63'-linked polyubiquitin).

It localises to the nucleus. The protein resides in the chromosome. In terms of biological role, DNA annealing helicase and endonuclease required to maintain genome stability at stalled or collapsed replication forks by facilitating fork restart and limiting inappropriate recombination that could occur during template switching events. Recruited to the sites of stalled DNA replication by polyubiquitinated PCNA and acts as a structure-specific endonuclease that cleaves the replication fork D-loop intermediate, generating an accessible 3'-OH group in the template of the leading strand, which is amenable to extension by DNA polymerase. In addition to endonuclease activity, also catalyzes the fork regression via annealing helicase activity in order to prevent disintegration of the replication fork and the formation of double-strand breaks. In Bos taurus (Bovine), this protein is DNA annealing helicase and endonuclease ZRANB3 (ZRANB3).